We begin with the raw amino-acid sequence, 221 residues long: Thyrotroph embryonic factor (221 aa).

Residues Glu-72–Cys-116 are disordered. A compositionally biased stretch (low complexity) spans Ser-73–Ser-100. The bZIP domain maps to Asp-173–Asp-221. The interval Lys-175 to Arg-195 is basic motif. The leucine-zipper stretch occupies residues Leu-196–Ile-203.

It belongs to the bZIP family. PAR subfamily. Binds DNA as a homodimer or a heterodimer. Can form a heterodimer with DBP.

The protein resides in the nucleus. Its function is as follows. Transcription factor that binds to and transactivates the TSHB promoter. Binds to a minimal DNA-binding sequence 5'-[TC][AG][AG]TTA[TC][AG]-3'. This chain is Thyrotroph embryonic factor (TEF), found in Phodopus sungorus (Striped hairy-footed hamster).